An 85-amino-acid polypeptide reads, in one-letter code: Conotoxin Cap15b (85 aa).

The signal sequence occupies residues 1–23; it reads MEKLTFLILVATVLLTIHVLVQS. Residues 24-49 constitute a propeptide that is removed on maturation; the sequence is DGDKHLKRRPKQYATKRLSALMRGHR. A Pyrrolidone carboxylic acid modification is found at Q50.

This sequence belongs to the conotoxin O2 superfamily. Contains 4 disulfide bonds. In terms of tissue distribution, expressed by the venom duct.

The protein localises to the secreted. This is Conotoxin Cap15b from Conus capitaneus (Captain cone).